The sequence spans 509 residues: Pancreatic secretory granule membrane major glycoprotein GP2 (509 aa).

A signal peptide spans 1–21 (MVGSYVLWLALASCILTLASP). A D10C region spans residues 36-56 (DPCQNYTLLDEPSRSTENTEG). 10 disulfide bridges follow: Cys-38/Cys-132, Cys-60/Cys-147, Cys-82/Cys-120, Cys-88/Cys-152, Cys-113/Cys-121, Cys-162/Cys-172, Cys-166/Cys-181, Cys-183/Cys-213, Cys-201/Cys-292, and Cys-233/Cys-256. Residues Asn-40, Asn-97, and Asn-109 are each glycosylated (N-linked (GlcNAc...) asparagine). Residues 158–202 (ATDKCKNLCRPEEACSFLNGTWDCFCRSDLNSSDVHSLQPRLNCG) enclose the EGF-like domain. 3 N-linked (GlcNAc...) asparagine glycosylation sites follow: Asn-176, Asn-188, and Asn-232. A ZP-N region spans residues 200–293 (NCGAKEIQVS…TILNINFQCA (94 aa)). Residues 200–456 (NCGAKEIQVS…PCCSRSQQRS (257 aa)) form the ZP domain. Asn-263 and Asn-314 each carry an N-linked (GlcNAc...) asparagine glycan. The interval 294 to 317 (YPLDMKVSLQTALHPIVSSLNISV) is flexible ZP-N/ZP-C linker. Positions 318 to 329 (DGEGEFTVRMAL) are internal hydrophobic patch (IHP). The segment at 318-456 (DGEGEFTVRM…PCCSRSQQRS (139 aa)) is ZP-C. Cystine bridges form between Cys-373–Cys-433, Cys-394–Cys-449, and Cys-438–Cys-445. Residues 463–471 (PARVLDLGP) are external hydrophobic patch (EHP). A lipid anchor (GPI-anchor amidated aspartate) is attached at Asp-484. Residues 485–509 (GTPSTAGFLLAWPMLLLPILLAELF) constitute a propeptide, removed in mature form.

In terms of assembly, interacts with SYCN. Interacts with bacterial adhesin fimH. In terms of processing, N-glycosylated. In terms of tissue distribution, expressed in pancreas.

The protein localises to the zymogen granule membrane. Its subcellular location is the secreted. It localises to the cell membrane. The protein resides in the apical cell membrane. It is found in the membrane raft. The protein localises to the endosome. Functions as an intestinal M-cell transcytotic receptor specific of type-I-piliated bacteria that participates in the mucosal immune response toward these bacteria. At the apical membrane of M-cells it binds fimH, a protein of the bacteria type I pilus tip. Internalizes bound bacteria, like E.coli and S.typhimurium, from the lumen of the intestine and delivers them, through M-cells, to the underlying organized lymphoid follicles where they are captured by antigen-presenting dendritic cells to elicit a mucosal immune response. The protein is Pancreatic secretory granule membrane major glycoprotein GP2 of Canis lupus familiaris (Dog).